The chain runs to 358 residues: Testis-specific serine/threonine-protein kinase 2 (358 aa).

Residues 12–272 (YIVGINLGKG…IDEILSHSWL (261 aa)) form the Protein kinase domain. Residues 18–26 (LGKGSYAKV) and K41 each bind ATP. D136 functions as the Proton acceptor in the catalytic mechanism. 2 stretches are compositionally biased toward basic and acidic residues: residues 296–315 (DCKL…DHKL) and 329–358 (NEDR…KAST). The tract at residues 296–358 (DCKLDTRPGS…SGAEVEKAST (63 aa)) is disordered.

The protein belongs to the protein kinase superfamily. CAMK Ser/Thr protein kinase family. As to quaternary structure, interacts with TSSK1B. Interacts with HSP90; this interaction stabilizes TSSK2. Mg(2+) serves as cofactor. Autophosphorylated. In terms of processing, ubiquitinated; HSP90 activity negatively regulates ubiquitination and degradation. As to expression, testis-specific. Expressed only in the spermatids postmeiotically at the final stages of cytodifferentiation in the seminiferous tubules (at protein level). Not detected in released sperms in the lumen of the seminiferous tubules. Also present in the epididymal sperm (at protein level).

The protein localises to the cytoplasm. It localises to the cytoskeleton. Its subcellular location is the microtubule organizing center. The protein resides in the centrosome. It is found in the centriole. The protein localises to the cytoplasmic vesicle. It localises to the secretory vesicle. Its subcellular location is the acrosome. The enzyme catalyses L-seryl-[protein] + ATP = O-phospho-L-seryl-[protein] + ADP + H(+). It catalyses the reaction L-threonyl-[protein] + ATP = O-phospho-L-threonyl-[protein] + ADP + H(+). With respect to regulation, activated by phosphorylation on Thr-174, potentially by autophosphorylation. Its function is as follows. Testis-specific serine/threonine-protein kinase required during spermatid development. Phosphorylates 'Ser-281' of TSKS and SPAG16. Involved in the late stages of spermatogenesis, during the reconstruction of the cytoplasm. During spermatogenesis, required for the transformation of a ring-shaped structure around the base of the flagellum originating from the chromatoid body. This chain is Testis-specific serine/threonine-protein kinase 2 (Tssk2), found in Mus musculus (Mouse).